Consider the following 593-residue polypeptide: Proline--tRNA ligase (593 aa).

The protein belongs to the class-II aminoacyl-tRNA synthetase family. ProS type 1 subfamily. Homodimer.

Its subcellular location is the cytoplasm. The enzyme catalyses tRNA(Pro) + L-proline + ATP = L-prolyl-tRNA(Pro) + AMP + diphosphate. Its function is as follows. Catalyzes the attachment of proline to tRNA(Pro) in a two-step reaction: proline is first activated by ATP to form Pro-AMP and then transferred to the acceptor end of tRNA(Pro). As ProRS can inadvertently accommodate and process non-cognate amino acids such as alanine and cysteine, to avoid such errors it has two additional distinct editing activities against alanine. One activity is designated as 'pretransfer' editing and involves the tRNA(Pro)-independent hydrolysis of activated Ala-AMP. The other activity is designated 'posttransfer' editing and involves deacylation of mischarged Ala-tRNA(Pro). The misacylated Cys-tRNA(Pro) is not edited by ProRS. This is Proline--tRNA ligase from Synechococcus sp. (strain CC9902).